Reading from the N-terminus, the 327-residue chain is DNA-directed RNA polymerase subunit alpha (327 aa).

Residues 1–233 (MVREKVKVST…NLFIPFLHVE (233 aa)) are alpha N-terminal domain (alpha-NTD). An alpha C-terminal domain (alpha-CTD) region spans residues 264–327 (TKELAFQYIF…KKILDILEKK (64 aa)).

It belongs to the RNA polymerase alpha chain family. In terms of assembly, in plastids the minimal PEP RNA polymerase catalytic core is composed of four subunits: alpha, beta, beta', and beta''. When a (nuclear-encoded) sigma factor is associated with the core the holoenzyme is formed, which can initiate transcription.

Its subcellular location is the plastid. It localises to the chloroplast. The catalysed reaction is RNA(n) + a ribonucleoside 5'-triphosphate = RNA(n+1) + diphosphate. In terms of biological role, DNA-dependent RNA polymerase catalyzes the transcription of DNA into RNA using the four ribonucleoside triphosphates as substrates. The polypeptide is DNA-directed RNA polymerase subunit alpha (Capsella bursa-pastoris (Shepherd's purse)).